Consider the following 188-residue polypeptide: dCTP deaminase (188 aa).

DCTP contacts are provided by residues 111–116, 135–137, Gln156, Tyr170, and Gln180; these read KSTYAR and TLE. Glu137 acts as the Proton donor/acceptor in catalysis.

It belongs to the dCTP deaminase family. Homotrimer.

The catalysed reaction is dCTP + H2O + H(+) = dUTP + NH4(+). It participates in pyrimidine metabolism; dUMP biosynthesis; dUMP from dCTP (dUTP route): step 1/2. Functionally, catalyzes the deamination of dCTP to dUTP. This is dCTP deaminase from Dechloromonas aromatica (strain RCB).